Consider the following 449-residue polypeptide: Trigger factor (449 aa).

One can recognise a PPIase FKBP-type domain in the interval G162–P242. Residues A428–A449 are disordered. Residues P438–A449 show a composition bias toward low complexity.

It belongs to the FKBP-type PPIase family. Tig subfamily.

It is found in the cytoplasm. It carries out the reaction [protein]-peptidylproline (omega=180) = [protein]-peptidylproline (omega=0). Functionally, involved in protein export. Acts as a chaperone by maintaining the newly synthesized protein in an open conformation. Functions as a peptidyl-prolyl cis-trans isomerase. The protein is Trigger factor of Acidothermus cellulolyticus (strain ATCC 43068 / DSM 8971 / 11B).